The primary structure comprises 156 residues: Large ribosomal subunit protein uL15 (156 aa).

Positions 1–16 are enriched in basic residues; that stretch reads MVRRFKRAVKYRRGSR. The disordered stretch occupies residues 1 to 35; the sequence is MVRRFKRAVKYRRGSRTHGWGRVGQHRKSGGSGGK.

It belongs to the universal ribosomal protein uL15 family. In terms of assembly, part of the 50S ribosomal subunit.

Binds to the 23S rRNA. In Pyrobaculum neutrophilum (strain DSM 2338 / JCM 9278 / NBRC 100436 / V24Sta) (Thermoproteus neutrophilus), this protein is Large ribosomal subunit protein uL15.